The primary structure comprises 374 residues: Chaperone protein DnaJ (374 aa).

A J domain is found at 5–70 (CYYEILNVSK…GKRSRYDQFG (66 aa)). The CR-type zinc-finger motif lies at 130-207 (GVEKEINIPR…CYGSGKIKKQ (78 aa)). Residues Cys143, Cys146, Cys159, Cys162, Cys181, Cys184, Cys195, and Cys198 each coordinate Zn(2+). CXXCXGXG motif repeat units lie at residues 143 to 150 (CDSCDGTG), 159 to 166 (CHACHGQG), 181 to 188 (CPVCNGTG), and 195 to 202 (CDDCYGSG).

The protein belongs to the DnaJ family. As to quaternary structure, homodimer. Zn(2+) is required as a cofactor.

The protein localises to the cytoplasm. Its function is as follows. Participates actively in the response to hyperosmotic and heat shock by preventing the aggregation of stress-denatured proteins and by disaggregating proteins, also in an autonomous, DnaK-independent fashion. Unfolded proteins bind initially to DnaJ; upon interaction with the DnaJ-bound protein, DnaK hydrolyzes its bound ATP, resulting in the formation of a stable complex. GrpE releases ADP from DnaK; ATP binding to DnaK triggers the release of the substrate protein, thus completing the reaction cycle. Several rounds of ATP-dependent interactions between DnaJ, DnaK and GrpE are required for fully efficient folding. Also involved, together with DnaK and GrpE, in the DNA replication of plasmids through activation of initiation proteins. This is Chaperone protein DnaJ from Francisella philomiragia subsp. philomiragia (strain ATCC 25017 / CCUG 19701 / FSC 153 / O#319-036).